Consider the following 391-residue polypeptide: Tumor susceptibility gene 101 protein (391 aa).

The residue at position 2 (A2) is an N-acetylalanine. The UEV domain maps to A2 to P145. The interval P159 to S163 is interaction with CEP55. Positions Y197–G220 are disordered. The span at T200–G215 shows a compositional bias: polar residues. T221 carries the phosphothreonine modification. Residues D237–E317 are a coiled coil. Residues P321–P324 carry the PTAP/PSAP motif motif. Positions A323 to Y391 constitute an SB domain.

Belongs to the ubiquitin-conjugating enzyme family. UEV subfamily. Component of the ESCRT-I complex (endosomal sorting complex required for transport I) which consists of TSG101, VPS28, a VPS37 protein (VPS37A to -D) and MVB12A or MVB12B in a 1:1:1:1 stoichiometry. Interacts with VPS37A, VPS37B and VPS37C. Component of an ESCRT-I complex (endosomal sorting complex required for transport I) which consists of TSG101, VPS28, VPS37A and UBAP1 in a 1:1:1:1 stoichiometry. Interacts with DMAP1. Interacts with GMCL. Interacts with ubiquitin, stathmin and AATF. Interacts with HGS; the interaction mediates the association with the ESCRT-0 complex. Interacts with GGA1 and GGA3. Interacts (via UEV domain) with PDCD6IP/AIP1. Interacts with VPS28, SNF8 and VPS36. Self-associates. Interacts with MVB12A; the association appears to be mediated by the TSG101-VPS37 binary subcomplex. Interacts with VPS37D. Interacts with LRSAM1. Interacts with CEP55; the interaction is required for cytokinesis. Interacts with PDCD6. Interacts with LITAF. Interacts with murine leukemia virus Gag polyprotein (via PSAP motif). Interacts with MGRN1. Interacts with ARRDC1; recruits TSG101 to the plasma membrane. Post-translationally, monoubiquitinated at multiple sites by LRSAM1 and by MGRN1. Ubiquitination inactivates it, possibly by regulating its shuttling between an active membrane-bound protein and an inactive soluble form. Ubiquitination by MGRN1 requires the presence of UBE2D1. Ubiquitous. Higher expression in brain and mammary gland. Lower expression in liver and tumoral tissues.

It is found in the cytoplasm. The protein localises to the early endosome membrane. Its subcellular location is the late endosome membrane. The protein resides in the cytoskeleton. It localises to the microtubule organizing center. It is found in the centrosome. The protein localises to the midbody. Its subcellular location is the midbody ring. The protein resides in the nucleus. Functionally, component of the ESCRT-I complex, a regulator of vesicular trafficking process. Binds to ubiquitinated cargo proteins and is required for the sorting of endocytic ubiquitinated cargos into multivesicular bodies (MVBs). Mediates the association between the ESCRT-0 and ESCRT-I complex. Required for completion of cytokinesis; the function requires CEP55. May be involved in cell growth and differentiation. Acts as a negative growth regulator. Required for the exosomal release of SDCBP, CD63 and syndecan. It may also play a role in the extracellular release of microvesicles that differ from the exosomes. This chain is Tumor susceptibility gene 101 protein (Tsg101), found in Mus musculus (Mouse).